The chain runs to 235 residues: Large ribosomal subunit protein uL1 (235 aa).

Belongs to the universal ribosomal protein uL1 family. Part of the 50S ribosomal subunit.

Its function is as follows. Binds directly to 23S rRNA. The L1 stalk is quite mobile in the ribosome, and is involved in E site tRNA release. Functionally, protein L1 is also a translational repressor protein, it controls the translation of the L11 operon by binding to its mRNA. This is Large ribosomal subunit protein uL1 from Methylobacterium sp. (strain 4-46).